A 60-amino-acid polypeptide reads, in one-letter code: Short neurotoxin 1 (60 aa).

Intrachain disulfides connect Cys3/Cys22, Cys17/Cys39, Cys41/Cys52, and Cys53/Cys58.

The protein belongs to the three-finger toxin family. Short-chain subfamily. Type I alpha-neurotoxin sub-subfamily. Expressed by the venom gland.

Its subcellular location is the secreted. Functionally, binds to muscle nicotinic acetylcholine receptor (nAChR) and inhibit acetylcholine from binding to the receptor, thereby impairing neuromuscular transmission. This chain is Short neurotoxin 1, found in Hydrophis ornatus (Ornate reef seasnake).